The primary structure comprises 80 residues: Protein FAM229B (80 aa).

Residues 1–44 (MPFRFGTQPRRFPVEGGDSSIGLEPGLSSSATCNGKEMSPTRQL) form a disordered region.

This sequence belongs to the FAM229 family.

The protein is Protein FAM229B (FAM229B) of Bos taurus (Bovine).